Consider the following 1230-residue polypeptide: Formin-like protein 14 (1230 aa).

Positions 1–194 (MSLLSRFFYK…QYVARRNINS (194 aa)) constitute a Phosphatase tensin-type domain. The active-site Phosphocysteine intermediate is the Cys-127. One can recognise a C2 tensin-type domain in the interval 200–339 (ERALSLDCVI…FRAEVLFGEV (140 aa)). 3 disordered regions span residues 412–432 (FNSP…SSDE), 460–822 (HESS…LKPL), and 1187–1230 (ENEK…RHRT). Low complexity predominate over residues 484–496 (DNPLNLPSDPPSS). 4 stretches are compositionally biased toward pro residues: residues 503–514 (LPPPPPPPPPPL), 524–535 (SQPPPPPPPPPL), 545–556 (SQPPPPPPPPPL), and 566–575 (SQPPPPPPLP). Residues 579 to 591 (NRDPLTTLHQPIN) show a composition bias toward polar residues. Pro residues-rich tracts occupy residues 592–630 (KTPP…PPPS), 637–649 (PSAP…PPPS), 660–672 (QPPP…PPTR), 679–688 (APPPPPPPPT), 699–711 (PSTP…PPPK), 718–728 (PKPPAPPPLPP), and 735–766 (APPP…PPPG). An FH2 domain is found at 809–1207 (VPTAAPKKTA…KLEKEAIKEK (399 aa)). Over residues 1187 to 1215 (ENEKQAEAEKKKLEKEAIKEKSATKKDGV) the composition is skewed to basic and acidic residues.

The protein belongs to the formin-like family. Class-II subfamily.

In Arabidopsis thaliana (Mouse-ear cress), this protein is Formin-like protein 14 (FH14).